The primary structure comprises 260 residues: 3'-5' ssDNA/RNA exonuclease TatD (260 aa).

The a divalent metal cation site is built by Glu91, His127, and His152.

The protein belongs to the metallo-dependent hydrolases superfamily. TatD-type hydrolase family. TatD subfamily. As to quaternary structure, monomer. The cofactor is Mg(2+).

It localises to the cytoplasm. Functionally, 3'-5' exonuclease that prefers single-stranded DNA and RNA. May play a role in the H(2)O(2)-induced DNA damage repair. The polypeptide is 3'-5' ssDNA/RNA exonuclease TatD (Escherichia fergusonii (strain ATCC 35469 / DSM 13698 / CCUG 18766 / IAM 14443 / JCM 21226 / LMG 7866 / NBRC 102419 / NCTC 12128 / CDC 0568-73)).